Here is a 137-residue protein sequence, read N- to C-terminus: Putative mucosal pentraxin homolog (137 aa).

In terms of domain architecture, Pentraxin (PTX) spans 1 to 137 (MGMYLLHIGN…YVVTKPKVWA (137 aa)). Ca(2+) is bound by residues E73, D75, and Q85.

Belongs to the pentraxin family. Not expressed in the intestinal tract including ascending colon, descending colon and rectum. Not expressed in the human colon cancer cell lines HT-29 and CaCo-2.

This is Putative mucosal pentraxin homolog (MPTX1) from Homo sapiens (Human).